A 287-amino-acid polypeptide reads, in one-letter code: Mu-like prophage FluMu DNA transposition protein B (287 aa).

An HTH cro/C1-type domain is found at Leu-7–Ala-62. Residues Gln-18–Asn-37 constitute a DNA-binding region (H-T-H motif). Residue Gly-98–Thr-105 coordinates ATP.

Functionally, this protein is a non-specific DNA-binding and ATP-hydrolyzing protein essential for bacteriophage integration and replication. In Haemophilus influenzae (strain ATCC 51907 / DSM 11121 / KW20 / Rd), this protein is Mu-like prophage FluMu DNA transposition protein B.